A 341-amino-acid chain; its full sequence is S-adenosylmethionine:tRNA ribosyltransferase-isomerase (341 aa).

Belongs to the QueA family. In terms of assembly, monomer.

It is found in the cytoplasm. It carries out the reaction 7-aminomethyl-7-carbaguanosine(34) in tRNA + S-adenosyl-L-methionine = epoxyqueuosine(34) in tRNA + adenine + L-methionine + 2 H(+). It functions in the pathway tRNA modification; tRNA-queuosine biosynthesis. In terms of biological role, transfers and isomerizes the ribose moiety from AdoMet to the 7-aminomethyl group of 7-deazaguanine (preQ1-tRNA) to give epoxyqueuosine (oQ-tRNA). The polypeptide is S-adenosylmethionine:tRNA ribosyltransferase-isomerase (Chlorobium luteolum (strain DSM 273 / BCRC 81028 / 2530) (Pelodictyon luteolum)).